Reading from the N-terminus, the 259-residue chain is uncharacterized protein (259 aa).

This is an uncharacterized protein from Schizosaccharomyces pombe (strain 972 / ATCC 24843) (Fission yeast).